Consider the following 217-residue polypeptide: Uracil-DNA glycosylase (217 aa).

The active-site Proton acceptor is the Asp62.

Belongs to the uracil-DNA glycosylase (UDG) superfamily. UNG family.

Its subcellular location is the cytoplasm. The catalysed reaction is Hydrolyzes single-stranded DNA or mismatched double-stranded DNA and polynucleotides, releasing free uracil.. Its function is as follows. Excises uracil residues from the DNA which can arise as a result of misincorporation of dUMP residues by DNA polymerase or due to deamination of cytosine. This is Uracil-DNA glycosylase from Streptococcus gordonii (strain Challis / ATCC 35105 / BCRC 15272 / CH1 / DL1 / V288).